We begin with the raw amino-acid sequence, 249 residues long: Ubiquinone biosynthesis O-methyltransferase (249 aa).

S-adenosyl-L-methionine-binding residues include arginine 44, glycine 75, aspartate 96, and methionine 138.

It belongs to the methyltransferase superfamily. UbiG/COQ3 family.

It carries out the reaction a 3-demethylubiquinol + S-adenosyl-L-methionine = a ubiquinol + S-adenosyl-L-homocysteine + H(+). The enzyme catalyses a 3-(all-trans-polyprenyl)benzene-1,2-diol + S-adenosyl-L-methionine = a 2-methoxy-6-(all-trans-polyprenyl)phenol + S-adenosyl-L-homocysteine + H(+). It functions in the pathway cofactor biosynthesis; ubiquinone biosynthesis. Its function is as follows. O-methyltransferase that catalyzes the 2 O-methylation steps in the ubiquinone biosynthetic pathway. This chain is Ubiquinone biosynthesis O-methyltransferase, found in Paramagnetospirillum magneticum (strain ATCC 700264 / AMB-1) (Magnetospirillum magneticum).